The following is a 218-amino-acid chain: Glutathione S-transferase (218 aa).

The GST N-terminal domain maps to 2 to 88 (PVTLGYWDIR…YIARKHDLCG (87 aa)). Residues 7-8 (YW), 46-50 (WLNEK), 59-60 (NL), and 72-73 (QS) contribute to the glutathione site. One can recognise a GST C-terminal domain in the interval 90 to 208 (TEEERIQLDI…KSSRFSCKQI (119 aa)). Residue tyrosine 116 coordinates substrate.

It belongs to the GST superfamily. Mu family. Homodimer.

The protein resides in the cytoplasm. It catalyses the reaction RX + glutathione = an S-substituted glutathione + a halide anion + H(+). Functionally, conjugation of reduced glutathione to a wide number of exogenous and endogenous hydrophobic electrophiles. This chain is Glutathione S-transferase, found in Mesocricetus auratus (Golden hamster).